A 319-amino-acid chain; its full sequence is Tetrahydromethanopterin S-methyltransferase subunit H (319 aa).

The protein belongs to the MtrH family. In terms of assembly, the complex is composed of 8 subunits; MtrA, MtrB, MtrC, MtrD, MtrE, MtrF, MtrG and MtrH.

The enzyme catalyses 5-methyl-5,6,7,8-tetrahydromethanopterin + coenzyme M + 2 Na(+)(in) = 5,6,7,8-tetrahydromethanopterin + methyl-coenzyme M + 2 Na(+)(out). The protein operates within one-carbon metabolism; methanogenesis from CO(2); methyl-coenzyme M from 5,10-methylene-5,6,7,8-tetrahydromethanopterin: step 2/2. In terms of biological role, part of a complex that catalyzes the formation of methyl-coenzyme M and tetrahydromethanopterin from coenzyme M and methyl-tetrahydromethanopterin. This is an energy-conserving, sodium-ion translocating step. MtrH catalyzes the transfer of the methyl group from methyl-tetrahydromethanopterin to the corrinoid prosthetic group of MtrA. The polypeptide is Tetrahydromethanopterin S-methyltransferase subunit H (Methanococcus maripaludis (strain C5 / ATCC BAA-1333)).